A 195-amino-acid polypeptide reads, in one-letter code: UPF0301 protein CCNA_03506 (195 aa).

Belongs to the UPF0301 (AlgH) family.

The chain is UPF0301 protein CCNA_03506 from Caulobacter vibrioides (strain NA1000 / CB15N) (Caulobacter crescentus).